Consider the following 423-residue polypeptide: Serpin B12 (423 aa).

The span at 63-72 shows a compositional bias: basic and acidic residues; sequence LSKDEHKEPN. The tract at residues 63–106 is disordered; sequence LSKDEHKEPNDPSPQSESKASDSSLEGQKQTSASQDQQGESTND. Positions 75 to 106 are enriched in polar residues; sequence SPQSESKASDSSLEGQKQTSASQDQQGESTND.

This sequence belongs to the serpin family. Ov-serpin subfamily. As to quaternary structure, interacts with SLFN12; as part of a pathway regulating cell differentiation.

The protein localises to the cytoplasm. In terms of biological role, inhibits trypsin and plasmin, but not thrombin, coagulation factor Xa, or urokinase-type plasminogen activator. May play a role in cell differentiation. The protein is Serpin B12 (Serpinb12) of Mus musculus (Mouse).